The primary structure comprises 216 residues: Redox-sensing transcriptional repressor Rex (216 aa).

A DNA-binding region (H-T-H motif) is located at residues 17-56; the sequence is IYFRYLTFLHDAGTDRISSAELSDAIKFDAATIRRDFSYF. An NAD(+)-binding site is contributed by 91–96; sequence GAGNLG.

It belongs to the transcriptional regulatory Rex family. As to quaternary structure, homodimer.

The protein resides in the cytoplasm. In terms of biological role, modulates transcription in response to changes in cellular NADH/NAD(+) redox state. The polypeptide is Redox-sensing transcriptional repressor Rex (Leuconostoc citreum (strain KM20)).